Reading from the N-terminus, the 567-residue chain is 2-succinyl-5-enolpyruvyl-6-hydroxy-3-cyclohexene-1-carboxylate synthase (567 aa).

Belongs to the TPP enzyme family. MenD subfamily. Homodimer. Mg(2+) serves as cofactor. Requires Mn(2+) as cofactor. It depends on thiamine diphosphate as a cofactor.

The enzyme catalyses isochorismate + 2-oxoglutarate + H(+) = 5-enolpyruvoyl-6-hydroxy-2-succinyl-cyclohex-3-ene-1-carboxylate + CO2. The protein operates within quinol/quinone metabolism; 1,4-dihydroxy-2-naphthoate biosynthesis; 1,4-dihydroxy-2-naphthoate from chorismate: step 2/7. It participates in quinol/quinone metabolism; menaquinone biosynthesis. Its function is as follows. Catalyzes the thiamine diphosphate-dependent decarboxylation of 2-oxoglutarate and the subsequent addition of the resulting succinic semialdehyde-thiamine pyrophosphate anion to isochorismate to yield 2-succinyl-5-enolpyruvyl-6-hydroxy-3-cyclohexene-1-carboxylate (SEPHCHC). The protein is 2-succinyl-5-enolpyruvyl-6-hydroxy-3-cyclohexene-1-carboxylate synthase of Yersinia pestis bv. Antiqua (strain Antiqua).